The primary structure comprises 673 residues: Protein kinase ORF74 (673 aa).

The Protein kinase domain occupies 128 to 404; sequence TDTDEAVARG…ARELLVYPRY (277 aa). The active-site Proton acceptor is Asp252. The interval 340-364 is disordered; it reads MDNDALDSRRTGRDGDPVNPEGFGT. Residues 345–355 are compositionally biased toward basic and acidic residues; it reads LDSRRTGRDGD.

This sequence belongs to the protein kinase superfamily. Ser/Thr protein kinase family.

It carries out the reaction L-seryl-[protein] + ATP = O-phospho-L-seryl-[protein] + ADP + H(+). It catalyses the reaction L-threonyl-[protein] + ATP = O-phospho-L-threonyl-[protein] + ADP + H(+). This chain is Protein kinase ORF74 (ORF74), found in Ictalurid herpesvirus 1 (strain Auburn) (IcHV-1).